A 514-amino-acid chain; its full sequence is Endogenous retrovirus group PABLB member 1 Env polyprotein (514 aa).

A glycan (N-linked (GlcNAc...) asparagine) is linked at Asn-58. The tract at residues Ser-60–Gln-316 is surface protein. A CXXC motif is present at residues Cys-82–Cys-85. Residues Asn-133, Asn-140, Asn-155, Asn-218, Asn-226, and Asn-267 are each glycosylated (N-linked (GlcNAc...) asparagine). Positions Gly-317–Pro-514 are transmembrane protein. The segment at Leu-328–Leu-348 is fusion peptide. Asn-350 and Asn-357 each carry an N-linked (GlcNAc...) asparagine glycan. The CKS-17 signature appears at Leu-378–Thr-394. A disulfide bridge links Cys-395 with Cys-402. Residues Cys-395 to Cys-403 carry the CX6CC motif. N-linked (GlcNAc...) asparagine glycosylation is found at Asn-408 and Asn-412. A helical membrane pass occupies residues Ile-452–Phe-472.

It belongs to the gamma type-C retroviral envelope protein family. HERV class-I R(b) env subfamily. In terms of processing, the CXXC motif is highly conserved across a broad range of retroviral envelope proteins. It is thought to participate in the formation of a labile disulfide bond possibly with the CX6CC motif present in the transmembrane domain. In terms of tissue distribution, low expression in placenta and testis.

The protein localises to the cell membrane. Functionally, retroviral envelope proteins mediate receptor recognition and membrane fusion during early infection. Endogenous envelope proteins may have kept, lost or modified their original function during evolution. This endogenous envelope protein has lost its original fusogenic properties. The sequence is that of Endogenous retrovirus group PABLB member 1 Env polyprotein (ERVPABLB-1) from Homo sapiens (Human).